A 488-amino-acid polypeptide reads, in one-letter code: Glutamyl-tRNA(Gln) amidotransferase subunit A (488 aa).

Residues K77 and S152 each act as charge relay system in the active site. The Acyl-ester intermediate role is filled by S176.

This sequence belongs to the amidase family. GatA subfamily. In terms of assembly, heterotrimer of A, B and C subunits.

It catalyses the reaction L-glutamyl-tRNA(Gln) + L-glutamine + ATP + H2O = L-glutaminyl-tRNA(Gln) + L-glutamate + ADP + phosphate + H(+). In terms of biological role, allows the formation of correctly charged Gln-tRNA(Gln) through the transamidation of misacylated Glu-tRNA(Gln) in organisms which lack glutaminyl-tRNA synthetase. The reaction takes place in the presence of glutamine and ATP through an activated gamma-phospho-Glu-tRNA(Gln). In Streptococcus pneumoniae serotype 19F (strain G54), this protein is Glutamyl-tRNA(Gln) amidotransferase subunit A.